A 251-amino-acid chain; its full sequence is MIELGVNIDHVATLRQARRTWEPDPAWAAMEAHLGGADGITVHLREDRRHIQDEDVRRLRELTQVKLNLEMAATDEMVGIACALRPEMAMLVPEGRHEVTTEGGLDVLAQEGRLKDVVARLADAGIVTSVFIDAELGQVEAAARIGARVCEIHTGPYAHAFHAAGRDPQSAAVVDEIDKVRRAGEAIRALGMRFNAGHALNYYNVQPIARLPEVRELHIGHAIVSRSVFTGLRDAVREMKRLMREAAGVGR.

Residue Asn7 participates in 3-amino-2-oxopropyl phosphate binding. Position 9–10 (9–10 (DH)) interacts with 1-deoxy-D-xylulose 5-phosphate. A 3-amino-2-oxopropyl phosphate-binding site is contributed by Arg18. His43 functions as the Proton acceptor in the catalytic mechanism. 2 residues coordinate 1-deoxy-D-xylulose 5-phosphate: Arg45 and His50. The Proton acceptor role is filled by Glu70. Thr100 serves as a coordination point for 1-deoxy-D-xylulose 5-phosphate. His198 functions as the Proton donor in the catalytic mechanism. Residues Ala199 and 220-221 (GH) contribute to the 3-amino-2-oxopropyl phosphate site.

The protein belongs to the PNP synthase family. In terms of assembly, homooctamer; tetramer of dimers.

Its subcellular location is the cytoplasm. The catalysed reaction is 3-amino-2-oxopropyl phosphate + 1-deoxy-D-xylulose 5-phosphate = pyridoxine 5'-phosphate + phosphate + 2 H2O + H(+). It functions in the pathway cofactor biosynthesis; pyridoxine 5'-phosphate biosynthesis; pyridoxine 5'-phosphate from D-erythrose 4-phosphate: step 5/5. In terms of biological role, catalyzes the complicated ring closure reaction between the two acyclic compounds 1-deoxy-D-xylulose-5-phosphate (DXP) and 3-amino-2-oxopropyl phosphate (1-amino-acetone-3-phosphate or AAP) to form pyridoxine 5'-phosphate (PNP) and inorganic phosphate. This Aromatoleum aromaticum (strain DSM 19018 / LMG 30748 / EbN1) (Azoarcus sp. (strain EbN1)) protein is Pyridoxine 5'-phosphate synthase.